We begin with the raw amino-acid sequence, 201 residues long: Small ribosomal subunit protein uS4 (201 aa).

One can recognise an S4 RNA-binding domain in the interval 91 to 151 (ARLDNVIYRA…DRSRSMLWFD (61 aa)).

Belongs to the universal ribosomal protein uS4 family. In terms of assembly, part of the 30S ribosomal subunit. Contacts protein S5. The interaction surface between S4 and S5 is involved in control of translational fidelity.

Functionally, one of the primary rRNA binding proteins, it binds directly to 16S rRNA where it nucleates assembly of the body of the 30S subunit. In terms of biological role, with S5 and S12 plays an important role in translational accuracy. This Corynebacterium urealyticum (strain ATCC 43042 / DSM 7109) protein is Small ribosomal subunit protein uS4.